We begin with the raw amino-acid sequence, 564 residues long: Bicarbonate transporter BicA (564 aa).

Residues 1 to 11 (MQITNKIHFRN) lie on the Cytoplasmic side of the membrane. A helical transmembrane segment spans residues 12-37 (LQGDLFGGVTAAVIALPMALAFGIAS). The Periplasmic portion of the chain corresponds to 38–40 (GAG). A helical membrane pass occupies residues 41–58 (ATAGLWGAVIVGFFAALF). Residues 59–70 (GGTPTLISEPTG) lie on the Cytoplasmic side of the membrane. Hydrogencarbonate is bound at residue Thr69. The chain crosses the membrane as a helical span at residues 71–86 (PMTVVQTAVIASLVAA). The Periplasmic segment spans residues 87-90 (DPDN). The helical transmembrane segment at 91–112 (GLAMAFTVVMMAGLFQIAFGLL) threads the bilayer. The Cytoplasmic portion of the chain corresponds to 113 to 122 (KLGKYVTMMP). A helical transmembrane segment spans residues 123–145 (YTVISGFMSGIGIILVILQLAPF). Over 146 to 170 (LGQASPKGGVIGTLQALPNLVSNVR) the chain is Periplasmic. The helical transmembrane segment at 171–185 (PVETLLALMTVGIIW) threads the bilayer. The Cytoplasmic portion of the chain corresponds to 186–196 (FMPSRWKKFAP). A helical membrane pass occupies residues 197-211 (PQLVALVLGTIISIT). Over 212–240 (LFGDLDIRRIGEIQAGLPALQLPVFQADQ) the chain is Periplasmic. The chain crosses the membrane as a helical span at residues 241–269 (LQRMLIDAAVLGMLGCIDALLTSVVADSL). The Na(+) site is built by Asp258 and Thr262. Topologically, residues 270-275 (TRTEHN) are cytoplasmic. The chain crosses the membrane as a helical span at residues 276-292 (SNKELVGQGIGNVMSGL). Topologically, residues 293 to 302 (FGGLGGAGAT) are periplasmic. Residue Gly300 participates in Na(+) binding. A hydrogencarbonate-binding site is contributed by Ala301. Thr302 is a binding site for Na(+). The helical transmembrane segment at 303–312 (MGTVVNIQSG) threads the bilayer. Residues 313–315 (GRT) lie on the Cytoplasmic side of the membrane. The helical transmembrane segment at 316-338 (ALSGLIRAMVLLVVILGAAKLAA) threads the bilayer. The Periplasmic segment spans residues 339–341 (TIP). The chain crosses the membrane as a helical span at residues 342-357 (LAVLAGIAFKVGVDII). Residues 358-369 (DWGFLKRAHHVS) are Cytoplasmic-facing. The chain crosses the membrane as a helical span at residues 370–390 (IKGALIMYAVIVLTVLVDLIA). Topologically, residues 391–392 (AV) are periplasmic. A helical membrane pass occupies residues 393 to 405 (GIGVFIANILTID). At 406 to 564 (RMSALQSKAV…PSSSSVQTTY (159 aa)) the chain is on the cytoplasmic side. In terms of domain architecture, STAS spans 432–542 (KRWLDEGNGR…DDRSEALKDA (111 aa)).

Belongs to the SLC26A/SulP transporter (TC 2.A.53) family. In terms of assembly, forms homodimers through the STAS cytoplasmic domain.

Its subcellular location is the cell inner membrane. Its function is as follows. Low affinity, high-flux Na(+)-dependent bicarbonate transporter. Involved in carbone dioxide-concentrating mechanisms (CCMs) that accumulate CO(2) and improve photosynthetic carbon fixation. The chain is Bicarbonate transporter BicA from Synechocystis sp. (strain ATCC 27184 / PCC 6803 / Kazusa).